A 349-amino-acid chain; its full sequence is Glycosyltransferase 8 domain-containing protein 2 (349 aa).

Topologically, residues 1 to 6 are cytoplasmic; it reads MALLRK. A helical; Signal-anchor for type II membrane protein transmembrane segment spans residues 7-24; sequence INQVLLFLLIVTLCVILY. Residues 25–349 are Lumenal-facing; it reads KKVHKGTVPK…AGIFKLNHHS (325 aa). An N-linked (GlcNAc...) asparagine glycan is attached at asparagine 234.

The protein belongs to the glycosyltransferase 8 family.

The protein resides in the membrane. The protein is Glycosyltransferase 8 domain-containing protein 2 (GLT8D2) of Homo sapiens (Human).